The chain runs to 1384 residues: DNA-directed RNA polymerase subunit beta (1384 aa).

The protein belongs to the RNA polymerase beta chain family. In terms of assembly, the RNAP catalytic core consists of 2 alpha, 1 beta, 1 beta' and 1 omega subunit. When a sigma factor is associated with the core the holoenzyme is formed, which can initiate transcription.

The enzyme catalyses RNA(n) + a ribonucleoside 5'-triphosphate = RNA(n+1) + diphosphate. DNA-dependent RNA polymerase catalyzes the transcription of DNA into RNA using the four ribonucleoside triphosphates as substrates. The protein is DNA-directed RNA polymerase subunit beta of Xylella fastidiosa (strain M12).